We begin with the raw amino-acid sequence, 331 residues long: UDP-GalNAc:beta-1,3-N-acetylgalactosaminyltransferase 1 (331 aa).

The Cytoplasmic portion of the chain corresponds to 1 to 20; it reads MAPAVLTAIPNRMSLRSLKW. Residues 21–43 form a helical; Signal-anchor for type II membrane protein membrane-spanning segment; it reads SLLLLSLLSFLVIWYLSLPHYNV. The Lumenal segment spans residues 44–331; it reads IERVNWMYFY…VMLRNTTCHY (288 aa). N-linked (GlcNAc...) asparagine glycans are attached at residues Asn72, Asn154, Asn198, Asn212, and Asn326.

The protein belongs to the glycosyltransferase 31 family. Mg(2+) is required as a cofactor.

It is found in the golgi apparatus membrane. It catalyses the reaction a globoside Gb3Cer (d18:1(4E)) + UDP-N-acetyl-alpha-D-galactosamine = a globoside Gb4Cer (d18:1(4E)) + UDP + H(+). It participates in protein modification; protein glycosylation. Its function is as follows. Transfers N-acetylgalactosamine onto globotriaosylceramide. Plays a critical role in preimplantation stage embryonic development. The chain is UDP-GalNAc:beta-1,3-N-acetylgalactosaminyltransferase 1 (B3galnt1) from Rattus norvegicus (Rat).